We begin with the raw amino-acid sequence, 140 residues long: Phosphopantetheine adenylyltransferase (140 aa).

Residue Ser9 participates in substrate binding. Residues 9–10 (SF) and His17 contribute to the ATP site. Substrate is bound by residues Lys41, Thr74, and Arg88. ATP contacts are provided by residues 89-91 (GLR), Glu99, and 124-130 (KRSLSST).

This sequence belongs to the bacterial CoaD family. Homohexamer. It depends on Mg(2+) as a cofactor.

The protein resides in the cytoplasm. The catalysed reaction is (R)-4'-phosphopantetheine + ATP + H(+) = 3'-dephospho-CoA + diphosphate. It participates in cofactor biosynthesis; coenzyme A biosynthesis; CoA from (R)-pantothenate: step 4/5. Functionally, reversibly transfers an adenylyl group from ATP to 4'-phosphopantetheine, yielding dephospho-CoA (dPCoA) and pyrophosphate. This chain is Phosphopantetheine adenylyltransferase, found in Mycoplasma capricolum subsp. capricolum (strain California kid / ATCC 27343 / NCTC 10154).